Reading from the N-terminus, the 1237-residue chain is Phosphorylase b kinase regulatory subunit alpha, skeletal muscle isoform (1237 aa).

Residues S629, S729, S735, and S758 each carry the phosphoserine modification. A calmodulin-binding region spans residues 810 to 840 (LTELYGKVGKIRHWGLIRYISGILRKKVEAL). At S972 the chain carries Phosphoserine; by autocatalysis. S981 is subject to Phosphoserine. A phosphoserine; by autocatalysis mark is found at S985 and S1007. S1018 is subject to Phosphoserine; by PKA. Phosphoserine occurs at positions 1020, 1023, and 1030. The tract at residues 1021–1069 (TESQPNGGHSLGADLMSPSFLSPGTSVTPSSGSFPGHHTSKDSRQGQWQ) is disordered. A compositionally biased stretch (low complexity) spans 1042-1056 (SPGTSVTPSSGSFPG). Positions 1060-1100 (SKDSRQGQWQRRRRLDGALNRVPIGFYQKVWKVLQKCHGLS) are calmodulin-binding. At S1127 the chain carries Phosphoserine. Residue C1234 is the site of S-farnesyl cysteine attachment.

The protein belongs to the phosphorylase b kinase regulatory chain family. Hexadecamer of 4 heterotetramers, each composed of alpha, beta, gamma, and delta subunits. Alpha (PHKA1 or PHKA2) and beta (PHKB) are regulatory subunits, gamma (PHKG1 or PHKG2) is the catalytic subunit, and delta is calmodulin. Phosphorylation of Ser-1018 by PKA stimulates the dephosphorylation of the beta subunit and, thus, reverses the initial stimulation of PHK by the faster beta-subunit phosphorylation by PKA, that occurs in muscle in response to adrenaline. In terms of processing, cys-1234 is farnesylated, but the C-terminal tripeptide is not removed and the cysteine carboxyl is not methylated. Isoform 1 predominates in muscle, heart, brain and testis. Isoforms 1 and 2 are expressed in similar quantities in the other tissues. Isoform 3 is highly expressed in slow muscle and heart.

The protein resides in the cell membrane. The protein operates within glycan biosynthesis; glycogen metabolism. By phosphorylation of various serine residues and by calcium. In terms of biological role, phosphorylase b kinase catalyzes the phosphorylation of serine in certain substrates, including troponin I. The alpha chain may bind calmodulin. The chain is Phosphorylase b kinase regulatory subunit alpha, skeletal muscle isoform (PHKA1) from Oryctolagus cuniculus (Rabbit).